Consider the following 432-residue polypeptide: Ribosomal protein uS12 methylthiotransferase RimO (432 aa).

The 119-residue stretch at 4–122 (NTIDIITLGC…LLADLGKAYK (119 aa)) folds into the MTTase N-terminal domain. [4Fe-4S] cluster contacts are provided by Cys13, Cys51, Cys85, Cys146, Cys150, and Cys153. Positions 132–363 (TTPHHYAYLK…MALQQEIAGE (232 aa)) constitute a Radical SAM core domain. The region spanning 366 to 432 (QTKIGKEFKV…DDFDLYASIL (67 aa)) is the TRAM domain.

This sequence belongs to the methylthiotransferase family. RimO subfamily. Requires [4Fe-4S] cluster as cofactor.

Its subcellular location is the cytoplasm. The catalysed reaction is L-aspartate(89)-[ribosomal protein uS12]-hydrogen + (sulfur carrier)-SH + AH2 + 2 S-adenosyl-L-methionine = 3-methylsulfanyl-L-aspartate(89)-[ribosomal protein uS12]-hydrogen + (sulfur carrier)-H + 5'-deoxyadenosine + L-methionine + A + S-adenosyl-L-homocysteine + 2 H(+). In terms of biological role, catalyzes the methylthiolation of an aspartic acid residue of ribosomal protein uS12. In Phocaeicola vulgatus (strain ATCC 8482 / DSM 1447 / JCM 5826 / CCUG 4940 / NBRC 14291 / NCTC 11154) (Bacteroides vulgatus), this protein is Ribosomal protein uS12 methylthiotransferase RimO.